Reading from the N-terminus, the 694-residue chain is Methionine--tRNA ligase (694 aa).

The 'HIGH' region motif lies at 12 to 22 (PYANGPLHLGH). Residues cysteine 143, cysteine 146, cysteine 156, and cysteine 159 each contribute to the Zn(2+) site. The 'KMSKS' region signature appears at 330–334 (KMSKS). Lysine 333 is a binding site for ATP. The segment at 552–577 (APAAPAATTKPAPSKADAAPAAVANP) is disordered. A tRNA-binding domain is found at 591–694 (DFAKLDLRIG…AGAQPGMPVR (104 aa)).

It belongs to the class-I aminoacyl-tRNA synthetase family. MetG type 1 subfamily. Homodimer. The cofactor is Zn(2+).

Its subcellular location is the cytoplasm. It carries out the reaction tRNA(Met) + L-methionine + ATP = L-methionyl-tRNA(Met) + AMP + diphosphate. Functionally, is required not only for elongation of protein synthesis but also for the initiation of all mRNA translation through initiator tRNA(fMet) aminoacylation. This chain is Methionine--tRNA ligase, found in Xanthomonas campestris pv. campestris (strain B100).